The primary structure comprises 224 residues: PKHD-type hydroxylase CYB_2270 (224 aa).

Residues leucine 78 to serine 176 enclose the Fe2OG dioxygenase domain. Residues histidine 96, aspartate 98, and histidine 157 each coordinate Fe cation. Residue arginine 167 participates in 2-oxoglutarate binding.

Fe(2+) is required as a cofactor. Requires L-ascorbate as cofactor.

This is PKHD-type hydroxylase CYB_2270 from Synechococcus sp. (strain JA-2-3B'a(2-13)) (Cyanobacteria bacterium Yellowstone B-Prime).